The chain runs to 311 residues: tRNA pseudouridine synthase B (311 aa).

Asp49 functions as the Nucleophile in the catalytic mechanism.

This sequence belongs to the pseudouridine synthase TruB family. Type 1 subfamily.

It carries out the reaction uridine(55) in tRNA = pseudouridine(55) in tRNA. Functionally, responsible for synthesis of pseudouridine from uracil-55 in the psi GC loop of transfer RNAs. The chain is tRNA pseudouridine synthase B from Actinobacillus succinogenes (strain ATCC 55618 / DSM 22257 / CCUG 43843 / 130Z).